The chain runs to 384 residues: Bacterial ceramide synthase (384 aa).

Its subcellular location is the cytoplasm. The catalysed reaction is 3-oxosphinganine + a fatty acyl-CoA = N-acyl-3-oxosphinganine + CoA + H(+). It carries out the reaction 3-oxosphinganine + tetradecanoyl-CoA = N-tetradecanoyl-3-oxosphinganine + CoA + H(+). It catalyses the reaction 3-oxosphinganine + hexadecanoyl-CoA = N-hexadecanoyl-3-oxosphinganine + CoA + H(+). The enzyme catalyses 3-oxosphinganine + (9Z)-hexadecenoyl-CoA = N-(9Z-hexadecenoyl)-3-oxosphinganine + CoA + H(+). The catalysed reaction is 3-oxosphinganine + octanoyl-CoA = N-octanoyl-3-oxosphinganine + CoA + H(+). It carries out the reaction 3-oxosphinganine + decanoyl-CoA = N-decanoyl-3-oxosphinganine + CoA + H(+). It catalyses the reaction 3-oxosphinganine + dodecanoyl-CoA = N-dodecanoyl-3-oxosphinganine + CoA + H(+). The enzyme catalyses 3-oxosphinganine + octadecanoyl-CoA = N-octadecanoyl-3-oxosphinganine + CoA + H(+). The catalysed reaction is 3-oxosphinganine + eicosanoyl-CoA = N-eicosanoyl-3-oxosphinganine + CoA + H(+). It carries out the reaction 3-oxosphinganine + docosanoyl-CoA = N-docosanoyl-3-ketodihydrosphingosine + CoA + H(+). It catalyses the reaction 3-oxosphinganine + tetracosanoyl-CoA = N-tetracosanoyl-3-oxosphinganine + CoA + H(+). The protein operates within lipid metabolism; sphingolipid metabolism. In terms of biological role, involved in de novo bacterial ceramide synthesis. Catalyzes the condensation of 3-oxosphinganine with an acyl-CoA to generate oxidized ceramides. Can use acyl-CoA substrates ranging from C8 to C24, with highest in vitro activity with C14 and very little activity with acyl-CoA thioesters of 18 carbons or longer. May have a preference for monounsaturated acyl-CoA substrates, as it has a threefold greater preference for C16:1-CoA over C16:0-CoA as a substrate in vitro. The polypeptide is Bacterial ceramide synthase (Caulobacter vibrioides (strain NA1000 / CB15N) (Caulobacter crescentus)).